The chain runs to 244 residues: Type III pantothenate kinase (244 aa).

7-14 (DIGNTRLK) provides a ligand contact to ATP. Substrate-binding positions include tyrosine 95 and 102–105 (GIDR). The active-site Proton acceptor is aspartate 104. Threonine 126 is an ATP binding site. Threonine 177 is a binding site for substrate.

Belongs to the type III pantothenate kinase family. As to quaternary structure, homodimer. Requires NH4(+) as cofactor. K(+) is required as a cofactor.

It localises to the cytoplasm. It catalyses the reaction (R)-pantothenate + ATP = (R)-4'-phosphopantothenate + ADP + H(+). The protein operates within cofactor biosynthesis; coenzyme A biosynthesis; CoA from (R)-pantothenate: step 1/5. Catalyzes the phosphorylation of pantothenate (Pan), the first step in CoA biosynthesis. The sequence is that of Type III pantothenate kinase from Acinetobacter baumannii (strain AB307-0294).